We begin with the raw amino-acid sequence, 178 residues long: Large ribosomal subunit protein uL6 (178 aa).

Belongs to the universal ribosomal protein uL6 family. As to quaternary structure, part of the 50S ribosomal subunit.

Its function is as follows. This protein binds to the 23S rRNA, and is important in its secondary structure. It is located near the subunit interface in the base of the L7/L12 stalk, and near the tRNA binding site of the peptidyltransferase center. The protein is Large ribosomal subunit protein uL6 of Lactococcus lactis subsp. lactis (strain IL1403) (Streptococcus lactis).